The following is a 502-amino-acid chain: Mannitol 2-dehydrogenase (502 aa).

37 to 48 serves as a coordination point for NAD(+); that stretch reads IVHVGVGGFHRA.

It belongs to the mannitol dehydrogenase family. Monomer.

It catalyses the reaction D-mannitol + NAD(+) = D-fructose + NADH + H(+). Catalyzes the NAD(H)-dependent interconversion of D-fructose and D-mannitol in the mannitol metabolic pathway. The polypeptide is Mannitol 2-dehydrogenase (Aspergillus oryzae (strain ATCC 42149 / RIB 40) (Yellow koji mold)).